Here is a 198-residue protein sequence, read N- to C-terminus: Probable chorismate pyruvate-lyase (198 aa).

Residues arginine 76, leucine 114, and glutamate 172 each coordinate substrate.

Belongs to the UbiC family.

It is found in the cytoplasm. The catalysed reaction is chorismate = 4-hydroxybenzoate + pyruvate. Its pathway is cofactor biosynthesis; ubiquinone biosynthesis. In terms of biological role, removes the pyruvyl group from chorismate, with concomitant aromatization of the ring, to provide 4-hydroxybenzoate (4HB) for the ubiquinone pathway. This Bordetella avium (strain 197N) protein is Probable chorismate pyruvate-lyase.